Reading from the N-terminus, the 178-residue chain is SsrA-binding protein (178 aa).

Residues 1–28 form a disordered region; sequence MAKKSTPVDSGRSKGKKASAPRGGGPAV.

This sequence belongs to the SmpB family.

It localises to the cytoplasm. Its function is as follows. Required for rescue of stalled ribosomes mediated by trans-translation. Binds to transfer-messenger RNA (tmRNA), required for stable association of tmRNA with ribosomes. tmRNA and SmpB together mimic tRNA shape, replacing the anticodon stem-loop with SmpB. tmRNA is encoded by the ssrA gene; the 2 termini fold to resemble tRNA(Ala) and it encodes a 'tag peptide', a short internal open reading frame. During trans-translation Ala-aminoacylated tmRNA acts like a tRNA, entering the A-site of stalled ribosomes, displacing the stalled mRNA. The ribosome then switches to translate the ORF on the tmRNA; the nascent peptide is terminated with the 'tag peptide' encoded by the tmRNA and targeted for degradation. The ribosome is freed to recommence translation, which seems to be the essential function of trans-translation. This is SsrA-binding protein from Corynebacterium urealyticum (strain ATCC 43042 / DSM 7109).